Reading from the N-terminus, the 341-residue chain is Anthranilate phosphoribosyltransferase (341 aa).

Residues Gly79, 82-83, Thr87, 89-92, 107-115, and Ser119 contribute to the 5-phospho-alpha-D-ribose 1-diphosphate site; these read GD, NIST, and KHGNRAVSS. Residue Gly79 participates in anthranilate binding. Ser91 is a binding site for Mg(2+). Residue Asn110 participates in anthranilate binding. Residue Arg165 coordinates anthranilate. 2 residues coordinate Mg(2+): Asp224 and Glu225.

Belongs to the anthranilate phosphoribosyltransferase family. In terms of assembly, homodimer. It depends on Mg(2+) as a cofactor.

The enzyme catalyses N-(5-phospho-beta-D-ribosyl)anthranilate + diphosphate = 5-phospho-alpha-D-ribose 1-diphosphate + anthranilate. The protein operates within amino-acid biosynthesis; L-tryptophan biosynthesis; L-tryptophan from chorismate: step 2/5. Its function is as follows. Catalyzes the transfer of the phosphoribosyl group of 5-phosphorylribose-1-pyrophosphate (PRPP) to anthranilate to yield N-(5'-phosphoribosyl)-anthranilate (PRA). The protein is Anthranilate phosphoribosyltransferase of Bacillus cereus (strain AH820).